Reading from the N-terminus, the 217-residue chain is UDP-N-acetylglucosamine transferase subunit ALG14 (217 aa).

Topologically, residues 1–3 (MLS) are lumenal. The chain crosses the membrane as a helical span at residues 4–26 (ILILAATAAGLVILLFQRLWTVL). At 27 to 217 (GPHHVTPRES…PKSVYLGRIV (191 aa)) the chain is on the cytoplasmic side.

Belongs to the ALG14 family. In terms of assembly, forms with ALG13 the active heterodimeric UDP-N-acetylglucosamine transferase complex.

The protein localises to the endoplasmic reticulum membrane. Functionally, part of the UDP-N-acetylglucosamine transferase complex that operates in the biosynthetic pathway of dolichol-linked oligosaccharides, the glycan precursors employed in protein asparagine (N)-glycosylation. The assembly of dolichol-linked oligosaccharides begins on the cytosolic side of the endoplasmic reticulum membrane and finishes in its lumen. The sequential addition of sugars to dolichol pyrophosphate produces dolichol-linked oligosaccharides containing fourteen sugars, including two GlcNAcs, nine mannoses and three glucoses. Once assembled, the oligosaccharides are transferred from the lipid to nascent proteins by oligosaccharyltransferases. Functions as a protein-membrane adapter recruiting ALG13 at the cytoplasmic face of the endoplasmic reticulum, where the complex catalyzes the second step of dolichol pyrophosphate biosynthesis, transferring a beta1,4-linked N-acetylglucosamine (GlcNAc) from UDP-GlcNAc to GlcNAc-pyrophosphatedolichol (Gn-PDol) to produce N,N'-diacetylchitobiosyl diphosphodolichol. N,N'-diacetylchitobiosyl diphosphodolichol is a substrate for ALG1, the following enzyme in the biosynthetic pathway. This Mus musculus (Mouse) protein is UDP-N-acetylglucosamine transferase subunit ALG14.